The sequence spans 540 residues: Probable G-protein coupled receptor 75 (540 aa).

Topologically, residues 1 to 46 are extracellular; that stretch reads MNTSAPLQNVPNATLLNMPPLHGGNSTSLQEGLRDFIHTATLVTCT. N-linked (GlcNAc...) asparagine glycans are attached at residues Asn2 and Asn25. The helical transmembrane segment at 47–67 threads the bilayer; that stretch reads FLLAIIFCLGSYGNFIVFLSF. Topologically, residues 68–86 are cytoplasmic; that stretch reads FDPSFRKFRTNFDFMILNL. Residues 87-107 form a helical membrane-spanning segment; it reads SFCDLFICGVTAPMFTFVLFF. Topologically, residues 108-120 are extracellular; the sequence is SSASSIPDSFCFT. Residues 121–141 traverse the membrane as a helical segment; sequence FHLTSSGFVIMSLKMVAVIAL. Topologically, residues 142 to 160 are cytoplasmic; the sequence is HRLRMVMGKQPNCTASFSC. Residues 161 to 181 form a helical membrane-spanning segment; it reads ILLLTLLLWATSFTLATLATL. Topologically, residues 182–205 are extracellular; the sequence is RTNKSHLCLPMSSLMDGEGKAILS. N-linked (GlcNAc...) asparagine glycosylation occurs at Asn184. Residues 206–226 form a helical membrane-spanning segment; sequence LYVVDFTFCVAVVSVSYIMIA. Topologically, residues 227–318 are cytoplasmic; the sequence is QTLRKNAQVK…INFSTAKDSK (92 aa). The chain crosses the membrane as a helical span at residues 319–339; the sequence is AVVTCVVIVLSVLVCCLPLGI. Residues 340-350 lie on the Extracellular side of the membrane; that stretch reads SLVQMVLSDNG. A helical transmembrane segment spans residues 351 to 371; that stretch reads SFILYQFELFGFTLIFFKSGL. Residues 372–540 are Cytoplasmic-facing; sequence NPFIYSRNSA…SAKQIPIPSV (169 aa). The interval 443–475 is disordered; sequence DQACGPSHSKESAASPKVSAGHQPCGQSSSTPI.

Belongs to the G-protein coupled receptor 1 family. As to expression, highly expressed in brain and heart. Also detected in skeletal muscle, liver and kidney. Also expressed by islet cells (at protein level).

The protein resides in the cell membrane. Functionally, g protein-coupled receptor that is activated by the chemokine CCL5/RANTES. Probably coupled to heterotrimeric Gq proteins, it stimulates inositol trisphosphate production and calcium mobilization upon activation. Together with CCL5/RANTES, may play a role in neuron survival through activation of a downstream signaling pathway involving the PI3, Akt and MAP kinases. CCL5/RANTES may also regulate insulin secretion by pancreatic islet cells through activation of this receptor. The polypeptide is Probable G-protein coupled receptor 75 (Gpr75) (Mus musculus (Mouse)).